A 707-amino-acid polypeptide reads, in one-letter code: MSDISIDALGQTMGDFSNHEKLGFDLGAFVGDLAFEEDSGSEDISLEGLQQELEECESDEVVANILSSGDKLREYAKGVENNLRKVELDSIEDYIKESDNLVSLHDQIRDCDSILSQMETLLSGFQEEIGSISSDIKILQEKSMDMGLRLKNRRVAESKLAKFVEDIIVPPKMIDVIVDGEVNEEYMKTLEILSKKLKFVEADQAVKSSKALKDVEPELEKLRQKAISKVYDFIVQKLIALRKPKTNIQILQQSVLLKYKYIISFLKEHGKEVFMDVRAAYIDTMNKVLSAHFRAYIQALEKLQLDIATAYDLIGVETRTTGLFSRAREPLKNRSAVFALGDRIKIIKDIDQPALIPHIAEASSLKYPYEVLFRSLHKLLMDTATSEYMFCDDFFGEESIFYEIFAGPFSVIDEHFNPVLSNCFDAIGLMLMIRIIHHHQLIMSRRRIPCLDSYLDKVNISLWPRFKMVFDSHLSSLRDANIKTLWEDDVHPHYVMRRYAEFTASFIHLNVEYGDGQLDINLERLRMAVDGLILKLAKLFPRPKQQIVFLINNYDMTIAVLKEAGPEGGKIQMHFEEMLKSNTSLFVEELLVEHFSDLIKFVKNRASEDSSLNPERSITIAEVEPLVKDFGSRWKTAIELMDKDIITSFSNFLCGMDILRAALTQLLLYYTRLTDCIKKIDGGSALNRDLVSIQSIMYEIRKYSKTF.

Residues 181–203 are a coiled coil; sequence EVNEEYMKTLEILSKKLKFVEAD.

This sequence belongs to the VPS52 family. Component of the Golgi-associated retrograde protein (GARP) complex, composed by VPS52, VPS53 and VPS54. Interacts directly with VPS53. Binds to VPS51. Mostly expressed in roots and flower buds, and, at low levels, in seeds, whole inflorescence and mature flowers. Also detected in pollen. Present in pollen, buds, leaves, and roots (at protein level).

It is found in the golgi apparatus. The protein resides in the trans-Golgi network membrane. It localises to the endosome membrane. Its subcellular location is the golgi apparatus membrane. In terms of biological role, acts as a component of the GARP complex that is involved in retrograde transport from early and late endosomes to the trans-Golgi network (TGN). The GARP complex facilitates tethering as well as SNARE complex assembly at the Golgi. Required for pollen tube elongation and other polar growth. This Arabidopsis thaliana (Mouse-ear cress) protein is Vacuolar protein sorting-associated protein 52 A (VPS52).